We begin with the raw amino-acid sequence, 248 residues long: PF03932 family protein CutC (248 aa).

It belongs to the CutC family. As to quaternary structure, homodimer.

It is found in the cytoplasm. In Shigella boydii serotype 18 (strain CDC 3083-94 / BS512), this protein is PF03932 family protein CutC.